Here is a 217-residue protein sequence, read N- to C-terminus: MKFFIDTADVGEIKKALALGLCDGVTTNPSLVAKTGRGFEDVLKEIVQLVPGPISAEVTATDYEGMLREGRHYAKFGSQVVIKVPLTVEGLRAVKTLTDEGTKVNVTLCFSPVQALLAAKAGATYISPFVGRLDDISQDGMAMVADIVQIYRNYGFKTQVLVASVRHPVHVLEAAKLGADVATIPYSVIEQLAKHPLTDAGLKKFLADWEKVPKAAK.

Lys-83 (schiff-base intermediate with substrate) is an active-site residue.

The protein belongs to the transaldolase family. Type 3B subfamily.

The protein resides in the cytoplasm. It catalyses the reaction D-sedoheptulose 7-phosphate + D-glyceraldehyde 3-phosphate = D-erythrose 4-phosphate + beta-D-fructose 6-phosphate. The protein operates within carbohydrate degradation; pentose phosphate pathway; D-glyceraldehyde 3-phosphate and beta-D-fructose 6-phosphate from D-ribose 5-phosphate and D-xylulose 5-phosphate (non-oxidative stage): step 2/3. In terms of biological role, transaldolase is important for the balance of metabolites in the pentose-phosphate pathway. The protein is Probable transaldolase of Anaeromyxobacter dehalogenans (strain 2CP-C).